Reading from the N-terminus, the 269-residue chain is Subtilisin Savinase (269 aa).

Gln2 is a binding site for Ca(2+). Residues 5–268 (PWGISRVQAP…SGLVNAEAAT (264 aa)) form the Peptidase S8 domain. The Charge relay system role is filled by Asp32. A Ca(2+)-binding site is contributed by Asp40. The Charge relay system role is filled by His62. 7 residues coordinate Ca(2+): Leu73, Asn75, Ile77, Val79, Ala163, Tyr165, and Ala168. The active-site Charge relay system is Ser215.

This sequence belongs to the peptidase S8 family. The cofactor is Ca(2+).

The protein resides in the secreted. It catalyses the reaction Hydrolysis of proteins with broad specificity for peptide bonds, and a preference for a large uncharged residue in P1. Hydrolyzes peptide amides.. Functionally, subtilisin is an extracellular alkaline serine protease, it catalyzes the hydrolysis of proteins and peptide amides. The sequence is that of Subtilisin Savinase from Lederbergia lenta (Bacillus lentus).